The sequence spans 373 residues: 3 beta-hydroxysteroid dehydrogenase/Delta 5--&gt;4-isomerase type 2 (373 aa).

Tyr-155 serves as the catalytic Proton acceptor. Lys-159 serves as a coordination point for NAD(+). A helical membrane pass occupies residues 288-308 (VPLLYWLAFLLETVSFLLSPI).

The protein belongs to the 3-beta-HSD family. In terms of tissue distribution, liver and kidney.

The protein localises to the endoplasmic reticulum membrane. Its subcellular location is the mitochondrion membrane. It carries out the reaction a 3beta-hydroxy-Delta(5)-steroid + NAD(+) = a 3-oxo-Delta(5)-steroid + NADH + H(+). The catalysed reaction is a 3-oxo-Delta(5)-steroid = a 3-oxo-Delta(4)-steroid. The enzyme catalyses pregnenolone + NAD(+) = pregn-5-ene-3,20-dione + NADH + H(+). It catalyses the reaction pregn-5-ene-3,20-dione = progesterone. It carries out the reaction 3beta-hydroxyandrost-5-en-17-one + NAD(+) = androst-5-ene-3,17-dione + NADH + H(+). The catalysed reaction is androst-5-ene-3,17-dione = androst-4-ene-3,17-dione. It participates in lipid metabolism; steroid biosynthesis. Functionally, 3-beta-HSD is a bifunctional enzyme, that catalyzes the oxidative conversion of Delta(5)-ene-3-beta-hydroxy steroid, and the oxidative conversion of ketosteroids. The 3-beta-HSD enzymatic system plays a crucial role in the biosynthesis of all classes of hormonal steroids. In Mus musculus (Mouse), this protein is 3 beta-hydroxysteroid dehydrogenase/Delta 5--&gt;4-isomerase type 2.